Here is a 455-residue protein sequence, read N- to C-terminus: Glutamyl-tRNA reductase (455 aa).

Residues 49-52 (TCNR), serine 109, 114-116 (ETQ), and glutamine 120 each bind substrate. The Nucleophile role is filled by cysteine 50. NADP(+) is bound at residue 189-194 (GAGKMG).

It belongs to the glutamyl-tRNA reductase family. As to quaternary structure, homodimer.

It catalyses the reaction (S)-4-amino-5-oxopentanoate + tRNA(Glu) + NADP(+) = L-glutamyl-tRNA(Glu) + NADPH + H(+). It participates in porphyrin-containing compound metabolism; protoporphyrin-IX biosynthesis; 5-aminolevulinate from L-glutamyl-tRNA(Glu): step 1/2. Functionally, catalyzes the NADPH-dependent reduction of glutamyl-tRNA(Glu) to glutamate 1-semialdehyde (GSA). The chain is Glutamyl-tRNA reductase from Geobacillus thermodenitrificans (strain NG80-2).